Consider the following 209-residue polypeptide: High frequency lysogenization protein HflD homolog (209 aa).

The protein belongs to the HflD family.

The protein resides in the cytoplasm. The protein localises to the cell inner membrane. This chain is High frequency lysogenization protein HflD homolog, found in Saccharophagus degradans (strain 2-40 / ATCC 43961 / DSM 17024).